Here is a 505-residue protein sequence, read N- to C-terminus: Trans-cinnamate 4-monooxygenase (505 aa).

Residues 3 to 23 (LLLLEKTLLGLFIAAITAIAI) traverse the membrane as a helical segment. (E)-cinnamate-binding positions include 213-218 (RSRLAQ) and A306. C447 serves as a coordination point for heme.

The protein belongs to the cytochrome P450 family. It depends on heme as a cofactor.

Its subcellular location is the membrane. The catalysed reaction is (E)-cinnamate + reduced [NADPH--hemoprotein reductase] + O2 = (E)-4-coumarate + oxidized [NADPH--hemoprotein reductase] + H2O + H(+). It participates in phenylpropanoid metabolism; trans-4-coumarate biosynthesis; trans-4-coumarate from trans-cinnamate: step 1/1. Its function is as follows. Catalyzes the first oxidative step of the phenylpropanoid pathway in higher plants by transforming trans-cinnamate into p-coumarate. The compounds formed by this pathway are essential components for lignification, pollination, and defense against ultraviolet light, predators and pathogens. The protein is Trans-cinnamate 4-monooxygenase (CYP73A14) of Glycyrrhiza echinata (Licorice).